The primary structure comprises 1653 residues: Ciliary rootlet coiled-coil protein 2 (1653 aa).

The span at 1–17 (MSSASSEPGNGDASQQP) shows a compositional bias: polar residues. The disordered stretch occupies residues 1–57 (MSSASSEPGNGDASQQPLLGLDTVIQRLEDTILSPTASREDRALTVRGEGRQASPTP). The segment covering 38–50 (SREDRALTVRGEG) has biased composition (basic and acidic residues). Coiled-coil stretches lie at residues 86 to 145 (VARV…SELE) and 310 to 351 (KVAL…LVAQ). Residues 367–396 (LGEPRRPLRSPQRATSPHQGASPPHICSPA) are disordered. The stretch at 423–1215 (LKSSQALVAS…QRKLAEVEAA (793 aa)) forms a coiled coil. Residues 1302-1356 (GLQRQSPWASPEQPGSPTKGSDSSQALPGQQGTSPPARPHSPLRWPSPTPGGRSS) are disordered. Over residues 1304 to 1335 (QRQSPWASPEQPGSPTKGSDSSQALPGQQGTS) the composition is skewed to polar residues. Residues 1361 to 1570 (VATVQDILRD…QAQMTEMEQA (210 aa)) adopt a coiled-coil conformation.

It belongs to the rootletin family.

The sequence is that of Ciliary rootlet coiled-coil protein 2 from Homo sapiens (Human).